A 482-amino-acid polypeptide reads, in one-letter code: UDP-N-acetylmuramate--L-alanine ligase (482 aa).

An ATP-binding site is contributed by 122-128; the sequence is GTHGKTT.

Belongs to the MurCDEF family.

Its subcellular location is the cytoplasm. The catalysed reaction is UDP-N-acetyl-alpha-D-muramate + L-alanine + ATP = UDP-N-acetyl-alpha-D-muramoyl-L-alanine + ADP + phosphate + H(+). It functions in the pathway cell wall biogenesis; peptidoglycan biosynthesis. Its function is as follows. Cell wall formation. This is UDP-N-acetylmuramate--L-alanine ligase from Mycolicibacterium smegmatis (strain ATCC 700084 / mc(2)155) (Mycobacterium smegmatis).